A 324-amino-acid polypeptide reads, in one-letter code: Viral cathepsin (324 aa).

Positions 1–16 are cleaved as a signal peptide; the sequence is MNKIVLYLLVYGAVQC. The propeptide at 17 to 113 is activation peptide; the sequence is AAYDVLKAPN…VVLDRPPDKG (97 aa). Disulfide bonds link C134–C175, C168–C208, and C263–C311. C137 is an active-site residue. N159 carries N-linked (GlcNAc...) asparagine; by host glycosylation. Active-site residues include H270 and N290.

This sequence belongs to the peptidase C1 family. In terms of processing, synthesized as an inactive proenzyme and activated by proteolytic removal of the inhibitory propeptide.

It catalyses the reaction Endopeptidase of broad specificity, hydrolyzing substrates of both cathepsin L and cathepsin B.. Its function is as follows. Cysteine protease that plays an essential role in host liquefaction to facilitate horizontal transmission of the virus. May participate in the degradation of foreign protein expressed by the baculovirus system. In Choristoneura fumiferana nuclear polyhedrosis virus (CfMNPV), this protein is Viral cathepsin (Vcath).